The sequence spans 336 residues: MTQTVQTNGVQPLSKTWELSLYELQRTPQEAITDGLEIAVSPRSLHSELMCPICLDMLKNTMTTKECLHRFCADCIITALRSGNKECPTCRKKLVSKRSLRPDPNFDALISKIYPSRDEYEAHQERVLARISKHNNQQALSHSIEEGLKIQAMNRLQRGKKHQIENGSGAEDNGDSSHCSNASVHSNQEAGPSIKRTKTSDDSGLDMDNATENGGGDIALDGVSEIELVFRPHPTLMEKEDAAQTRYIKTSGNATVDHLSKYLAVRLALEEMRKNGEASPINVEAASEKQYTIYIPTASNQFTVLNGSFSLELVSEKYWKVNKPMELYFAPTKEHK.

The tract at residues 2-179 is interaction with HIP2; that stretch reads TQTVQTNGVQ…AEDNGDSSHC (178 aa). The RING-type zinc finger occupies 51-91; it reads CPICLDMLKNTMTTKECLHRFCADCIITALRSGNKECPTCR. The interaction with nucleosomes via an acidic patch on histone H2A and histone H2B stretch occupies residues 93 to 98; sequence KLVSKR. Residues 158–218 are disordered; the sequence is RGKKHQIENG…NATENGGGDI (61 aa). The segment covering 176–190 has biased composition (polar residues); the sequence is SSHCSNASVHSNQEA.

Component of chromatin-associated Polycomb (PcG) complexes. Component of a PRC1-like complex. Component of some MLL1/MLL complex.

Its subcellular location is the nucleus. The protein localises to the cytoplasm. It localises to the chromosome. It catalyses the reaction S-ubiquitinyl-[E2 ubiquitin-conjugating enzyme]-L-cysteine + [acceptor protein]-L-lysine = [E2 ubiquitin-conjugating enzyme]-L-cysteine + N(6)-ubiquitinyl-[acceptor protein]-L-lysine.. Its pathway is protein modification; protein ubiquitination. In terms of biological role, E3 ubiquitin-protein ligase that mediates monoubiquitination of 'Lys-119' of histone H2A (H2AK119Ub), thereby playing a central role in histone code and gene regulation. H2AK119Ub gives a specific tag for epigenetic transcriptional repression. Essential component of a Polycomb group (PcG) multiprotein PRC1-like complex, a complex class required to maintain the transcriptionally repressive state of many genes, including Hox genes, throughout development. PcG PRC1 complex acts via chromatin remodeling and modification of histones, rendering chromatin heritably changed in its expressibility. In Danio rerio (Zebrafish), this protein is E3 ubiquitin-protein ligase RING2 (rnf2).